Here is a 946-residue protein sequence, read N- to C-terminus: Bifunctional glutamine synthetase adenylyltransferase/adenylyl-removing enzyme (946 aa).

An adenylyl removase region spans residues methionine 1–glutamate 440. The interval serine 449–glutamate 946 is adenylyl transferase.

It belongs to the GlnE family. Mg(2+) serves as cofactor.

It catalyses the reaction [glutamine synthetase]-O(4)-(5'-adenylyl)-L-tyrosine + phosphate = [glutamine synthetase]-L-tyrosine + ADP. The catalysed reaction is [glutamine synthetase]-L-tyrosine + ATP = [glutamine synthetase]-O(4)-(5'-adenylyl)-L-tyrosine + diphosphate. Functionally, involved in the regulation of glutamine synthetase GlnA, a key enzyme in the process to assimilate ammonia. When cellular nitrogen levels are high, the C-terminal adenylyl transferase (AT) inactivates GlnA by covalent transfer of an adenylyl group from ATP to specific tyrosine residue of GlnA, thus reducing its activity. Conversely, when nitrogen levels are low, the N-terminal adenylyl removase (AR) activates GlnA by removing the adenylyl group by phosphorolysis, increasing its activity. The regulatory region of GlnE binds the signal transduction protein PII (GlnB) which indicates the nitrogen status of the cell. The protein is Bifunctional glutamine synthetase adenylyltransferase/adenylyl-removing enzyme of Escherichia coli (strain SMS-3-5 / SECEC).